Reading from the N-terminus, the 456-residue chain is Cell adhesion molecule 1 (456 aa).

An N-terminal signal peptide occupies residues 1–47; sequence MASAVLPSGSQCAAAAAVAAAAAPPGLRLRLLLLLLSAAALIPTGDG. The Ig-like V-type domain occupies 48–142; the sequence is QNLFTKDVTV…PPQESYTTIT (95 aa). At 48 to 388 the chain is on the extracellular side; that stretch reads QNLFTKDVTV…EEGTIGAVDH (341 aa). The cysteines at positions 67 and 127 are disulfide-linked. Residues Asn-70, Asn-104, Asn-116, and Asn-168 are each glycosylated (N-linked (GlcNAc...) asparagine). Ig-like C2-type domains follow at residues 147 to 241 and 246 to 332; these read PRNL…RYLE and PQVH…YMLY. 2 disulfide bridges follow: Cys-169–Cys-223 and Cys-270–Cys-316. N-linked (GlcNAc...) asparagine glycans are attached at residues Asn-307 and Asn-311. Residues 389-409 form a helical membrane-spanning segment; it reads AVIGGVVAVVVFAMLCLLIIL. Residues 410-456 are Cytoplasmic-facing; it reads GRYFARHKGTYFTHEAKGADDAADADTAIINAEGGQNNSEEKKEYFI. Thr-436 carries the phosphothreonine modification. Ser-448 carries the phosphoserine modification.

Belongs to the nectin family. Homodimer (via Ig-like V-type domain). Interacts with FARP1. Interacts (via Ig-like V-type domain) with CRTAM (via Ig-like V-type domain); the interaction competes with CRTAM homodimerization and CADM1 homodimerization. Interacts (via C-terminus) with EPB41L3/DAL1. The interaction with EPB41L3/DAL1 may act to anchor CADM1 to the actin cytoskeleton. Interacts (via C-terminus) with MPP2 (via PDZ domain). Interacts (via C-terminus) with MPP3 (via PDZ domain); this interaction connects CADM1 with DLG1. Interacts (via C-terminus) with PALS2 (via PDZ domain). In terms of processing, N-glycosylated. Glycosylation at Asn-70 and Asn-104 promotes adhesive binding and synapse induction. Expressed dominantly in epithelial cells but not expressed in fibroblast cells (at protein level). Expressed in the T-cell area of lymph nodes, specifically in CD8+ and CD4- CD8- dendritic cells (at protein level). Expressed in CD8+ dendritic cells in the spleen (at protein level). Expressed in CD103+ dendritic cells in the small intestine lamina propria and mesenteric lymph nodes (at protein level). Expressed in brain, lung, kidney, testis, heart, spleen and liver, but not expressed in skeletal muscle.

It is found in the cell membrane. The protein resides in the synaptic cell membrane. Mediates homophilic cell-cell adhesion in a Ca(2+)-independent manner. Also mediates heterophilic cell-cell adhesion with CADM3 and NECTIN3 in a Ca(2+)-independent manner. Interaction with CRTAM promotes natural killer (NK) cell cytotoxicity and interferon-gamma (IFN-gamma) secretion by CD8+ T-cells in vitro as well as NK cell-mediated rejection of tumors expressing CADM1 in vivo. In mast cells, may mediate attachment to and promote communication with nerves. CADM1, together with MITF, is essential for development and survival of mast cells in vivo. By interacting with CRTAM and thus promoting the adhesion between CD8+ T-cells and CD8+ dendritic cells, regulates the retention of activated CD8+ T-cell within the draining lymph node. Required for the intestinal retention of intraepithelial CD4+ CD8+ T-cells and, to a lesser extent, intraepithelial and lamina propria CD8+ T-cells and CD4+ T-cells. Interaction with CRTAM promotes the adhesion to gut-associated CD103+ dendritic cells, which may facilitate the expression of gut-homing and adhesion molecules on T-cells and the conversion of CD4+ T-cells into CD4+ CD8+ T-cells. Acts as a synaptic cell adhesion molecule and plays a role in the formation of dendritic spines and in synapse assembly. May be involved in neuronal migration, axon growth, pathfinding, and fasciculation on the axons of differentiating neurons. May play diverse roles in the spermatogenesis including in the adhesion of spermatocytes and spermatids to Sertoli cells and for their normal differentiation into mature spermatozoa. This chain is Cell adhesion molecule 1, found in Mus musculus (Mouse).